The chain runs to 958 residues: DNA repair and recombination protein RDH54 (958 aa).

The tract at residues 189 to 217 (EALSQNMGNPSPPTTSTTETVPSTKNDGG) is disordered. Residues 202–212 (TTSTTETVPST) show a composition bias toward low complexity. A Helicase ATP-binding domain is found at 333-521 (LENDSDISGC…FTIIDFINPG (189 aa)). Position 380–387 (380–387 (IPLTGLCK)) interacts with ATP. Positions 506–509 (NDLN) match the DEGH box motif. A Glycyl lysine isopeptide (Lys-Gly) (interchain with G-Cter in ubiquitin) cross-link involves residue lysine 649. The 160-residue stretch at 665–824 (KLKVLMTLLE…DSEMRNKESS (160 aa)) folds into the Helicase C-terminal domain.

This sequence belongs to the SNF2/RAD54 helicase family. Interacts with RAD51 and DMC1.

The protein localises to the nucleus. The catalysed reaction is ATP + H2O = ADP + phosphate + H(+). Functionally, involved in the recombinational repair of double-strand breaks (DSB) in DNA during mitosis and meiosis. Has DNA dependent ATPase activity. Promotes D-loop (displacement loop) formation with RAD51 recombinase. Modifies the topology of double-stranded DNA during the D-loop reaction to facilitate the invasion of the homologous duplex molecule by the initiating single-stranded DNA substrate. Required for adaptation from G2/M checkpoint arrest induced by a double strand break, by participating in monitoring the extent of single-stranded DNA produced by resection of DNA ends. This role is distinct from its roles in recombination. Promotes colocalization of RAD51 and DMC1 during meiotic recombination. Involved in crossover interference. The protein is DNA repair and recombination protein RDH54 (RDH54) of Saccharomyces cerevisiae (strain ATCC 204508 / S288c) (Baker's yeast).